A 324-amino-acid chain; its full sequence is Granaticin polyketide synthase bifunctional cyclase/dehydratase (324 aa).

A disordered region spans residues 1-21 (MVQPAATPVSLPSPTVHRSEH).

It functions in the pathway antibiotic biosynthesis; granaticin biosynthesis. Its function is as follows. Is needed for correct cyclization of the oligoketide leading to isochromanequinone formation. This chain is Granaticin polyketide synthase bifunctional cyclase/dehydratase (gra-orf4), found in Streptomyces violaceoruber.